The sequence spans 154 residues: 6,7-dimethyl-8-ribityllumazine synthase (154 aa).

Residues F15, 47–49, and 71–73 each bind 5-amino-6-(D-ribitylamino)uracil; these read TFD and AVI. 76-77 provides a ligand contact to (2S)-2-hydroxy-3-oxobutyl phosphate; sequence ET. The active-site Proton donor is H79. Position 104 (L104) interacts with 5-amino-6-(D-ribitylamino)uracil. A (2S)-2-hydroxy-3-oxobutyl phosphate-binding site is contributed by R119.

This sequence belongs to the DMRL synthase family.

The catalysed reaction is (2S)-2-hydroxy-3-oxobutyl phosphate + 5-amino-6-(D-ribitylamino)uracil = 6,7-dimethyl-8-(1-D-ribityl)lumazine + phosphate + 2 H2O + H(+). It functions in the pathway cofactor biosynthesis; riboflavin biosynthesis; riboflavin from 2-hydroxy-3-oxobutyl phosphate and 5-amino-6-(D-ribitylamino)uracil: step 1/2. In terms of biological role, catalyzes the formation of 6,7-dimethyl-8-ribityllumazine by condensation of 5-amino-6-(D-ribitylamino)uracil with 3,4-dihydroxy-2-butanone 4-phosphate. This is the penultimate step in the biosynthesis of riboflavin. This is 6,7-dimethyl-8-ribityllumazine synthase from Saccharolobus solfataricus (strain ATCC 35092 / DSM 1617 / JCM 11322 / P2) (Sulfolobus solfataricus).